The following is a 476-amino-acid chain: Homeobox protein invected (476 aa).

3 disordered regions span residues 1 to 43 (MAAV…SEDI), 273 to 331 (KTRY…TSGD), and 347 to 381 (DRPSSGRSPRTRRPKKPPGDTASNDEKRPRTAFSG). Residues 23-32 (SPNTRDTTSP) show a composition bias toward polar residues. Composition is skewed to basic and acidic residues over residues 33–43 (ECHDDEKSEDI) and 292–305 (KLDEARVPDIKTPD). The segment covering 318-331 (GSNSGSTSGATSGD) has biased composition (low complexity). Residues 372–431 (EKRPRTAFSGPQLARLKHEFAENRYLTERRRQSLAAELGLAEAQIKIWFQNKRAKIKKAS) constitute a DNA-binding region (homeobox).

The protein belongs to the engrailed homeobox family. In terms of tissue distribution, expressed in the middle silk gland but not in the posterior silk gland during the fourth molt/fifth intermolt period.

Its subcellular location is the nucleus. Functionally, this protein might be involved in the compartmentalization of the silk gland. This Bombyx mori (Silk moth) protein is Homeobox protein invected (INV).